The sequence spans 91 residues: UPF0250 protein PputGB1_4855 (91 aa).

This sequence belongs to the UPF0250 family.

This Pseudomonas putida (strain GB-1) protein is UPF0250 protein PputGB1_4855.